The sequence spans 197 residues: C4-dicarboxylate transport transcriptional regulatory protein DctR (197 aa).

The Response regulatory domain maps to 4 to 120; it reads TVHIVDDEES…HIVDIALSAI (117 aa). A 4-aspartylphosphate modification is found at Asp-53. An inter-domain linker region spans residues 128-135; sequence AEAQAREA. Residues 136–197 form the HTH luxR-type domain; it reads VAARRASLSA…RNIADLARMT (62 aa). Positions 160–179 form a DNA-binding region, H-T-H motif; that stretch reads NKQIAERLGIAMRTVEVHRS.

Phosphorylated by DctS.

It is found in the cytoplasm. Its function is as follows. Member of the two-component regulatory system DctS/DctR involved in the transport of C4-dicarboxylates. DctR functions as a transcriptional repressor of genes for C4-dicarboxylate transport. This chain is C4-dicarboxylate transport transcriptional regulatory protein DctR (dctR), found in Rhodobacter capsulatus (Rhodopseudomonas capsulata).